We begin with the raw amino-acid sequence, 1416 residues long: DNA-directed RNA polymerase subunit beta' (1416 aa).

Zn(2+) is bound by residues Cys60, Cys62, Cys75, and Cys78. Residues Asp449, Asp451, and Asp453 each contribute to the Mg(2+) site. 4 residues coordinate Zn(2+): Cys781, Cys855, Cys862, and Cys865.

Belongs to the RNA polymerase beta' chain family. As to quaternary structure, the RNAP catalytic core consists of 2 alpha, 1 beta, 1 beta' and 1 omega subunit. When a sigma factor is associated with the core the holoenzyme is formed, which can initiate transcription. The cofactor is Mg(2+). Zn(2+) is required as a cofactor.

It catalyses the reaction RNA(n) + a ribonucleoside 5'-triphosphate = RNA(n+1) + diphosphate. DNA-dependent RNA polymerase catalyzes the transcription of DNA into RNA using the four ribonucleoside triphosphates as substrates. This chain is DNA-directed RNA polymerase subunit beta', found in Treponema pallidum (strain Nichols).